Consider the following 369-residue polypeptide: Glutamate 5-kinase (369 aa).

Lys-8 lines the ATP pocket. Positions 49, 136, and 148 each coordinate substrate. ATP-binding positions include 168–169 (TD) and 211–217 (TGGMATK). One can recognise a PUA domain in the interval 276–354 (TGKLYLDSGA…DEISQILGYG (79 aa)).

The protein belongs to the glutamate 5-kinase family.

It localises to the cytoplasm. It carries out the reaction L-glutamate + ATP = L-glutamyl 5-phosphate + ADP. The protein operates within amino-acid biosynthesis; L-proline biosynthesis; L-glutamate 5-semialdehyde from L-glutamate: step 1/2. Its function is as follows. Catalyzes the transfer of a phosphate group to glutamate to form L-glutamate 5-phosphate. The chain is Glutamate 5-kinase from Rippkaea orientalis (strain PCC 8801 / RF-1) (Cyanothece sp. (strain PCC 8801)).